Here is a 185-residue protein sequence, read N- to C-terminus: Sulfopyruvate decarboxylase subunit beta (185 aa).

This sequence belongs to the TPP enzyme family. In terms of assembly, heterododecamer composed of 6 subunits alpha and 6 subunits beta. It depends on thiamine diphosphate as a cofactor.

It catalyses the reaction 3-sulfopyruvate + H(+) = sulfoacetaldehyde + CO2. The protein operates within cofactor biosynthesis; coenzyme M biosynthesis; sulfoacetaldehyde from phosphoenolpyruvate and sulfite: step 4/4. Functionally, involved in the biosynthesis of the coenzyme M (2-mercaptoethanesulfonic acid). Catalyzes the decarboxylation of sulfopyruvate to sulfoacetaldehyde. This chain is Sulfopyruvate decarboxylase subunit beta, found in Methanothermobacter thermautotrophicus (strain ATCC 29096 / DSM 1053 / JCM 10044 / NBRC 100330 / Delta H) (Methanobacterium thermoautotrophicum).